Consider the following 142-residue polypeptide: Peptidyl-prolyl cis-trans isomerase FKBP2 (142 aa).

Residues 1-21 (MRLSWFRVLTVLSICLSAVAT) form the signal peptide. Residues 49-137 (GDVLHMHYTG…VFEVELLKIE (89 aa)) enclose the PPIase FKBP-type domain. The short motif at 139-142 (RTEL) is the Prevents secretion from ER element.

Belongs to the FKBP-type PPIase family. FKBP2 subfamily. Interacts with ARFGEF1/BIG1 and the C-terminal of EPB41L2. In terms of tissue distribution, T-cells and thymus.

It is found in the endoplasmic reticulum membrane. It carries out the reaction [protein]-peptidylproline (omega=180) = [protein]-peptidylproline (omega=0). With respect to regulation, inhibited by both FK506 and rapamycin. Functionally, PPIases accelerate the folding of proteins. It catalyzes the cis-trans isomerization of proline imidic peptide bonds in oligopeptides. In Homo sapiens (Human), this protein is Peptidyl-prolyl cis-trans isomerase FKBP2 (FKBP2).